Reading from the N-terminus, the 207-residue chain is Small ribosomal subunit protein uS4 (207 aa).

The S4 RNA-binding domain maps to 97–159; that stretch reads SRLDNVCYRM…AKSQLRIQAA (63 aa).

It belongs to the universal ribosomal protein uS4 family. As to quaternary structure, part of the 30S ribosomal subunit. Contacts protein S5. The interaction surface between S4 and S5 is involved in control of translational fidelity.

In terms of biological role, one of the primary rRNA binding proteins, it binds directly to 16S rRNA where it nucleates assembly of the body of the 30S subunit. With S5 and S12 plays an important role in translational accuracy. The protein is Small ribosomal subunit protein uS4 of Halorhodospira halophila (strain DSM 244 / SL1) (Ectothiorhodospira halophila (strain DSM 244 / SL1)).